The following is a 149-amino-acid chain: D-aminoacyl-tRNA deacylase (149 aa).

The short motif at Gly-137–Pro-138 is the Gly-cisPro motif, important for rejection of L-amino acids element.

The protein belongs to the DTD family. Homodimer.

The protein resides in the cytoplasm. The enzyme catalyses glycyl-tRNA(Ala) + H2O = tRNA(Ala) + glycine + H(+). It carries out the reaction a D-aminoacyl-tRNA + H2O = a tRNA + a D-alpha-amino acid + H(+). Functionally, an aminoacyl-tRNA editing enzyme that deacylates mischarged D-aminoacyl-tRNAs. Also deacylates mischarged glycyl-tRNA(Ala), protecting cells against glycine mischarging by AlaRS. Acts via tRNA-based rather than protein-based catalysis; rejects L-amino acids rather than detecting D-amino acids in the active site. By recycling D-aminoacyl-tRNA to D-amino acids and free tRNA molecules, this enzyme counteracts the toxicity associated with the formation of D-aminoacyl-tRNA entities in vivo and helps enforce protein L-homochirality. The polypeptide is D-aminoacyl-tRNA deacylase (Thermotoga petrophila (strain ATCC BAA-488 / DSM 13995 / JCM 10881 / RKU-1)).